Reading from the N-terminus, the 272-residue chain is Endogenous Bornavirus-like nucleoprotein 2 (272 aa).

Residues methionine 48 to leucine 70 form a disordered region.

May act as an RNA-binding protein. The C-terminal region is highly homologous to the bornavirus nucleocapsid N protein that binds viral RNA and oligomerizes. The viral protein also possesses a nuclear import and a nuclear export signal. These 2 signals seem absent in EBLN-2 supporting an unrelated function in Human. This Homo sapiens (Human) protein is Endogenous Bornavirus-like nucleoprotein 2 (EBLN2).